A 244-amino-acid chain; its full sequence is Zinc import ATP-binding protein ZnuC 2 (244 aa).

The ABC transporter domain maps to 3–218 (IGCASLTIQL…PEYLALFGID (216 aa)). 35–42 (GPNGSGKT) serves as a coordination point for ATP.

The protein belongs to the ABC transporter superfamily. Zinc importer (TC 3.A.1.15.5) family. As to quaternary structure, the complex is composed of two ATP-binding proteins (ZnuC), two transmembrane proteins (ZnuB) and a solute-binding protein (ZnuA).

It localises to the cell inner membrane. It catalyses the reaction Zn(2+)(out) + ATP(in) + H2O(in) = Zn(2+)(in) + ADP(in) + phosphate(in) + H(+)(in). Functionally, part of the ABC transporter complex ZnuABC involved in zinc import. Responsible for energy coupling to the transport system. The sequence is that of Zinc import ATP-binding protein ZnuC 2 from Hahella chejuensis (strain KCTC 2396).